The following is a 231-amino-acid chain: Achaete-scute homolog 1 (231 aa).

2 disordered regions span residues 1–24 (MESS…FLPP) and 39–92 (AAAA…PELM). Positions 39–51 (AAAAAQSAQQQQP) are enriched in low complexity. Over residues 76–85 (SAAKQVKRQR) the composition is skewed to basic residues. In terms of domain architecture, bHLH spans 113–165 (AAVARRNERERNRVKLVNLGFATLREHVPNGAANKKMSKVETLRSAVEYIRAL). At lysine 151 the chain carries N6-acetyllysine.

In terms of assembly, efficient DNA binding requires dimerization with another bHLH protein. Forms a heterodimer with TCF3. Developing CNS and PNS at embryonic and postnatal stages. Expressed in the epithelium of glandular stomach.

It localises to the nucleus. Its function is as follows. Transcription factor that plays a key role in neuronal differentiation: acts as a pioneer transcription factor, accessing closed chromatin to allow other factors to bind and activate neural pathways. Directly binds the E box motif (5'-CANNTG-3') on promoters and promotes transcription of neuronal genes. The combination of three transcription factors, ASCL1, POU3F2/BRN2 and MYT1L, is sufficient to reprogram fibroblasts and other somatic cells into induced neuronal (iN) cells in vitro. Plays a role at early stages of development of specific neural lineages in most regions of the CNS, and of several lineages in the PNS. Essential for the generation of olfactory and autonomic neurons. Acts synergistically with FOXN4 to specify the identity of V2b neurons rather than V2a from bipotential p2 progenitors during spinal cord neurogenesis, probably through DLL4-NOTCH signaling activation. Involved in the regulation of neuroendocrine cell development in the glandular stomach. The protein is Achaete-scute homolog 1 of Mus musculus (Mouse).